A 191-amino-acid polypeptide reads, in one-letter code: Chromobox protein homolog 5 (191 aa).

The disordered stretch occupies residues 1–21 (MGKKTKRTADSSSSEDEEEYV). Phosphoserine is present on residues serine 11, serine 12, serine 13, and serine 14. The Chromo 1 domain occupies 20–78 (YVVEKVLDRRMVKGQVEYLLKWKGFSEEHNTWEPEKNLDCPELISEFMKKYKKMKEGEN). Lysine 32 participates in a covalent cross-link: Glycyl lysine isopeptide (Lys-Gly) (interchain with G-Cter in SUMO2). Residue lysine 40 is modified to N6-acetyllysine. The segment at 70–117 (YKKMKEGENNKPREKSEGNKRKSSFSNSADDIKSKKKREQSNDIARGF) is disordered. Residues 73-89 (MKEGENNKPREKSEGNK) are compositionally biased toward basic and acidic residues. Lysine 91 participates in a covalent cross-link: Glycyl lysine isopeptide (Lys-Gly) (interchain with G-Cter in SUMO2). Serine 92, serine 93, serine 95, and serine 97 each carry phosphoserine. Glycyl lysine isopeptide (Lys-Gly) (interchain with G-Cter in SUMO2) cross-links involve residues lysine 102, lysine 106, lysine 154, and lysine 184. The region spanning 121-179 (LEPEKIIGATDSCGDLMFLMKWKDTDEADLVLAKEANVKCPQIVIAFYEERLTWHAYPE) is the Chromo 2; shadow subtype domain.

In terms of assembly, homodimer. Interacts with histone H3 methylated at 'Lys-9'. Interacts (via Chromo 2; shadow subtype domain) with the MIS12 complex subunit NSL1; the interaction is direct, involves dimeric CBX5, and occurs during interphase. Interacts with POGZ; POGZ and PXVXL motif-containing proteins such as INCENP and TRIM28 compete for interaction with CBX5. Interacts with LRIF1 (via PxVxL motif). Interacts with INCENP. Interacts with TRIM24. Interacts (via the chromoshadow domain) with ATRX; the interaction is direct. Interacts (via the chromoshadow domain) with CHAF1A; the interaction is direct. Interacts (via the chromoshadow domain) with LBR; the interaction is direct. Interacts (via the chromoshadow domain) with NIPBL; the interaction is direct. Interacts (via the chromoshadow domain) with SP100; the interaction is direct. Interacts (via the chromoshadow domain) with STAM2; the interaction is direct. Interacts (via the chromoshadow domain) with TRIM28; the interaction is direct. Interacts (via the chromoshadow domain) with CBX3; the interaction is direct. Interacts with PRR14 (via N-terminus). Interacts with RRP1B. Interacts with HNRNPU (via C-terminus); this interaction is, at least in part, RNA-dependent. Interacts with ZNF263; recruited to the SIX3 promoter along with other proteins involved in chromatin modification and transcriptional corepression where it contributes to transcriptional repression. Interacts with AURKB during mitosis. Interacts with CHAMP1. Interacts with BAHD1. Interacts with HP1BP3. Interacts with CHD3. Interacts with CHD4. Interacts with SMYD5. Interacts with KMT5B. Interacts with KMT5C. Post-translationally, phosphorylation of HP1 and LBR may be responsible for some of the alterations in chromatin organization and nuclear structure which occur at various times during the cell cycle. Phosphorylated during interphase and possibly hyper-phosphorylated during mitosis. In terms of processing, ubiquitinated.

It localises to the nucleus. It is found in the chromosome. The protein localises to the centromere. Component of heterochromatin that recognizes and binds histone H3 tails methylated at 'Lys-9' (H3K9me), leading to epigenetic repression. In contrast, it is excluded from chromatin when 'Tyr-41' of histone H3 is phosphorylated (H3Y41ph). May contribute to the association of heterochromatin with the inner nuclear membrane by interactions with the lamin-B receptor (LBR). Involved in the formation of kinetochore through interaction with the MIS12 complex subunit NSL1. Required for the formation of the inner centromere. Functionally, component of heterochromatin that recognizes and binds histone H3 tails methylated at 'Lys-9' (H3K9me), leading to epigenetic repression. In contrast, it is excluded from chromatin when 'Tyr-41' of histone H3 is phosphorylated (H3Y41ph). Can interact with lamin-B receptor (LBR). This interaction can contribute to the association of the heterochromatin with the inner nuclear membrane. Involved in the formation of functional kinetochore through interaction with MIS12 complex proteins. This chain is Chromobox protein homolog 5 (Cbx5), found in Mus musculus (Mouse).